The chain runs to 336 residues: Eukaryotic translation initiation factor 3 subunit H (336 aa).

Residues 21-154 (VQCDGLAAMK…LKAYRLTPQA (134 aa)) form the MPN domain.

It belongs to the eIF-3 subunit H family. Component of the eukaryotic translation initiation factor 3 (eIF-3) complex.

The protein resides in the cytoplasm. Functionally, component of the eukaryotic translation initiation factor 3 (eIF-3) complex, which is involved in protein synthesis of a specialized repertoire of mRNAs and, together with other initiation factors, stimulates binding of mRNA and methionyl-tRNAi to the 40S ribosome. The eIF-3 complex specifically targets and initiates translation of a subset of mRNAs involved in cell proliferation. In Culex quinquefasciatus (Southern house mosquito), this protein is Eukaryotic translation initiation factor 3 subunit H.